Consider the following 38-residue polypeptide: Photosystem II reaction center protein L (38 aa).

Residues 17 to 37 (SLYWGLLLIFVLAVLFSSYFF) traverse the membrane as a helical segment.

This sequence belongs to the PsbL family. In terms of assembly, PSII is composed of 1 copy each of membrane proteins PsbA, PsbB, PsbC, PsbD, PsbE, PsbF, PsbH, PsbI, PsbJ, PsbK, PsbL, PsbM, PsbT, PsbX, PsbY, PsbZ, Psb30/Ycf12, at least 3 peripheral proteins of the oxygen-evolving complex and a large number of cofactors. It forms dimeric complexes.

It localises to the plastid. The protein localises to the chloroplast thylakoid membrane. Functionally, one of the components of the core complex of photosystem II (PSII). PSII is a light-driven water:plastoquinone oxidoreductase that uses light energy to abstract electrons from H(2)O, generating O(2) and a proton gradient subsequently used for ATP formation. It consists of a core antenna complex that captures photons, and an electron transfer chain that converts photonic excitation into a charge separation. This subunit is found at the monomer-monomer interface and is required for correct PSII assembly and/or dimerization. The protein is Photosystem II reaction center protein L of Ephedra sinica (Chinese ephedra).